The following is a 93-amino-acid chain: Co-chaperonin GroES (93 aa).

It belongs to the GroES chaperonin family. In terms of assembly, heptamer of 7 subunits arranged in a ring. Interacts with the chaperonin GroEL.

It localises to the cytoplasm. Together with the chaperonin GroEL, plays an essential role in assisting protein folding. The GroEL-GroES system forms a nano-cage that allows encapsulation of the non-native substrate proteins and provides a physical environment optimized to promote and accelerate protein folding. GroES binds to the apical surface of the GroEL ring, thereby capping the opening of the GroEL channel. This chain is Co-chaperonin GroES, found in Streptococcus constellatus.